A 721-amino-acid polypeptide reads, in one-letter code: Catalase-peroxidase (721 aa).

A cross-link (tryptophyl-tyrosyl-methioninium (Trp-Tyr) (with M-249)) is located at residues 95 to 223 (WHSAGSYRLF…LGAVHMGLIY (129 aa)). His96 (proton acceptor) is an active-site residue. Positions 223-249 (YVNPQGRDGKPDPLKSAHDVRVTFKRM) form a cross-link, tryptophyl-tyrosyl-methioninium (Tyr-Met) (with W-95). Residue His264 participates in heme b binding.

Belongs to the peroxidase family. Peroxidase/catalase subfamily. As to quaternary structure, homodimer or homotetramer. Requires heme b as cofactor. Post-translationally, formation of the three residue Trp-Tyr-Met cross-link is important for the catalase, but not the peroxidase activity of the enzyme.

The catalysed reaction is H2O2 + AH2 = A + 2 H2O. It catalyses the reaction 2 H2O2 = O2 + 2 H2O. Bifunctional enzyme with both catalase and broad-spectrum peroxidase activity. This chain is Catalase-peroxidase, found in Parvibaculum lavamentivorans (strain DS-1 / DSM 13023 / NCIMB 13966).